Here is a 102-residue protein sequence, read N- to C-terminus: MIALRLIAVTLVVAMAASTTWARSFNKRANFDPSCAGVYNRELLGRLSRLCDDCYNVFREPKVATECRNNCFYNPVFVQCLEYLIPADLHEEYQAHVQTVGK.

The first 22 residues, Met-1–Ala-22, serve as a signal peptide directing secretion. Intrachain disulfides connect Cys-35/Cys-71, Cys-51/Cys-67, and Cys-54/Cys-80. Val-100 is subject to Valine amide.

Belongs to the arthropod CHH/MIH/GIH/VIH hormone family.

It localises to the secreted. In terms of biological role, hormone found in the sinus gland of isopods and decapods which controls the blood sugar level. Has a secretagogue action over the amylase released from the midgut gland. May act as a stress hormone and may be involved in the control of molting and reproduction. The sequence is that of Crustacean hyperglycemic hormones 3 (CHH3) from Penaeus monodon (Giant tiger prawn).